Here is a 201-residue protein sequence, read N- to C-terminus: Recombination protein RecR (201 aa).

Residues 60–75 (CTSCGNVDTSDPCTIC) form a C4-type zinc finger. The Toprim domain maps to 83 to 178 (TTLVVVEDVS…KVTRLAHGVP (96 aa)).

The protein belongs to the RecR family.

Its function is as follows. May play a role in DNA repair. It seems to be involved in an RecBC-independent recombinational process of DNA repair. It may act with RecF and RecO. The chain is Recombination protein RecR from Methylobacterium radiotolerans (strain ATCC 27329 / DSM 1819 / JCM 2831 / NBRC 15690 / NCIMB 10815 / 0-1).